We begin with the raw amino-acid sequence, 275 residues long: Ovocalyxin-32 (275 aa).

A signal peptide spans 1–23 (MPGLRAALPAALLLLSSFPPAAA). Cystatin LXN-type domains lie at 32 to 131 (PGVM…NKKQ) and 151 to 255 (TANY…GLED). Positions 254–275 (EDGSGQDSGSAAGTSHETKGNF) are disordered. Residues 256–268 (GSGQDSGSAAGTS) are compositionally biased toward low complexity.

The protein belongs to the protease inhibitor I47 (latexin) family. In terms of tissue distribution, expressed at high levels in the uterine and isthmus regions of the oviduct, and concentrated in the eggshell.

It is found in the secreted. Component of the matrix of the eggshell. This is Ovocalyxin-32 from Gallus gallus (Chicken).